Consider the following 273-residue polypeptide: Bis(5'-nucleosyl)-tetraphosphatase, symmetrical (273 aa).

The protein belongs to the Ap4A hydrolase family.

The catalysed reaction is P(1),P(4)-bis(5'-adenosyl) tetraphosphate + H2O = 2 ADP + 2 H(+). Its function is as follows. Hydrolyzes diadenosine 5',5'''-P1,P4-tetraphosphate to yield ADP. The polypeptide is Bis(5'-nucleosyl)-tetraphosphatase, symmetrical (apaH) (Buchnera aphidicola subsp. Schizaphis graminum (strain Sg)).